The primary structure comprises 377 residues: Chaperone protein DnaJ (377 aa).

Residues 5-70 (DYYEILGVER…EKRAAYDQYG (66 aa)) form the J domain. The segment at 134–212 (GITKDIQIQT…CHGDGRVHKT (79 aa)) adopts a CR-type zinc-finger fold. Cysteine 147, cysteine 150, cysteine 164, cysteine 167, cysteine 186, cysteine 189, cysteine 200, and cysteine 203 together coordinate Zn(2+). CXXCXGXG motif repeat units follow at residues 147–154 (CDHCNGSG), 164–171 (CPTCHGHG), 186–193 (CPHCHGTG), and 200–207 (CKKCHGDG).

It belongs to the DnaJ family. As to quaternary structure, homodimer. It depends on Zn(2+) as a cofactor.

The protein localises to the cytoplasm. In terms of biological role, participates actively in the response to hyperosmotic and heat shock by preventing the aggregation of stress-denatured proteins and by disaggregating proteins, also in an autonomous, DnaK-independent fashion. Unfolded proteins bind initially to DnaJ; upon interaction with the DnaJ-bound protein, DnaK hydrolyzes its bound ATP, resulting in the formation of a stable complex. GrpE releases ADP from DnaK; ATP binding to DnaK triggers the release of the substrate protein, thus completing the reaction cycle. Several rounds of ATP-dependent interactions between DnaJ, DnaK and GrpE are required for fully efficient folding. Also involved, together with DnaK and GrpE, in the DNA replication of plasmids through activation of initiation proteins. The chain is Chaperone protein DnaJ from Actinobacillus succinogenes (strain ATCC 55618 / DSM 22257 / CCUG 43843 / 130Z).